Here is a 161-residue protein sequence, read N- to C-terminus: Cyclic pyranopterin monophosphate synthase (161 aa).

Residues 75 to 77 and 113 to 114 each bind substrate; these read LCH and ME. Asp128 is an active-site residue.

The protein belongs to the MoaC family. Homohexamer; trimer of dimers.

The enzyme catalyses (8S)-3',8-cyclo-7,8-dihydroguanosine 5'-triphosphate = cyclic pyranopterin phosphate + diphosphate. Its pathway is cofactor biosynthesis; molybdopterin biosynthesis. Functionally, catalyzes the conversion of (8S)-3',8-cyclo-7,8-dihydroguanosine 5'-triphosphate to cyclic pyranopterin monophosphate (cPMP). This Thioalkalivibrio sulfidiphilus (strain HL-EbGR7) protein is Cyclic pyranopterin monophosphate synthase.